Consider the following 471-residue polypeptide: Glutamate--tRNA ligase (471 aa).

The 'HIGH' region signature appears at 9–19; the sequence is PSPTGYLHVGG. Zn(2+)-binding residues include cysteine 98, cysteine 100, cysteine 125, and histidine 127. The short motif at 237–241 is the 'KMSKS' region element; sequence KLSKR. Lysine 240 serves as a coordination point for ATP.

It belongs to the class-I aminoacyl-tRNA synthetase family. Glutamate--tRNA ligase type 1 subfamily. Monomer. Requires Zn(2+) as cofactor.

The protein localises to the cytoplasm. The enzyme catalyses tRNA(Glu) + L-glutamate + ATP = L-glutamyl-tRNA(Glu) + AMP + diphosphate. Functionally, catalyzes the attachment of glutamate to tRNA(Glu) in a two-step reaction: glutamate is first activated by ATP to form Glu-AMP and then transferred to the acceptor end of tRNA(Glu). The chain is Glutamate--tRNA ligase from Shigella flexneri.